The following is a 368-amino-acid chain: Glutamate 5-kinase (368 aa).

Lysine 10 provides a ligand contact to ATP. Substrate contacts are provided by serine 50, aspartate 137, and asparagine 149. ATP is bound at residue threonine 169 to aspartate 170. The PUA domain maps to arginine 276–methionine 354.

This sequence belongs to the glutamate 5-kinase family.

It localises to the cytoplasm. It catalyses the reaction L-glutamate + ATP = L-glutamyl 5-phosphate + ADP. Its pathway is amino-acid biosynthesis; L-proline biosynthesis; L-glutamate 5-semialdehyde from L-glutamate: step 1/2. Its function is as follows. Catalyzes the transfer of a phosphate group to glutamate to form L-glutamate 5-phosphate. In Pseudomonas savastanoi pv. phaseolicola (strain 1448A / Race 6) (Pseudomonas syringae pv. phaseolicola (strain 1448A / Race 6)), this protein is Glutamate 5-kinase.